We begin with the raw amino-acid sequence, 420 residues long: UDP-glucuronic acid decarboxylase 1 (420 aa).

Met-1 carries the post-translational modification N-acetylmethionine. The Cytoplasmic portion of the chain corresponds to 1–19; it reads MVSKGLLRLVSSVNRRKMK. Residues 20–40 form a helical; Signal-anchor for type II membrane protein membrane-spanning segment; the sequence is LLLGIALFAYAASVWGNFVNM. Residues 41 to 420 lie on the Lumenal side of the membrane; it reads RSIQENGELK…RVKKGRTRHS (380 aa). Thr-94 is subject to Phosphothreonine. Residues Gly-98, Phe-99, Val-100, Asp-119, Asn-120, Phe-122, Thr-123, Gly-124, Asp-144, and Val-145 each coordinate NAD(+). UDP-alpha-D-glucuronate is bound by residues Leu-149 and Tyr-150. NAD(+) contacts are provided by Leu-159 and Ser-161. Position 177 (Lys-177) interacts with UDP-alpha-D-glucuronate. Thr-178 is a binding site for NAD(+). Positions 185, 188, 191, and 192 each coordinate UDP-alpha-D-glucuronate. The NAD(+) site is built by Ala-200, Tyr-231, and Lys-235. Catalysis depends on Tyr-231, which acts as the Proton acceptor. 3 residues coordinate UDP-alpha-D-glucuronate: Tyr-245, Gln-248, and Glu-249. 3 residues coordinate NAD(+): Thr-261, His-267, and Arg-272. N-linked (GlcNAc...) asparagine glycosylation occurs at Asn-316.

The protein belongs to the NAD(P)-dependent epimerase/dehydratase family. UDP-glucuronic acid decarboxylase subfamily. As to quaternary structure, homodimer and homotetramer. Interacts with AKT1. NAD(+) serves as cofactor. In terms of tissue distribution, ubiquitous. Detected in heart, brain, spleen, lung, testis, liver, skeletal muscle and kidney.

Its subcellular location is the golgi apparatus. It localises to the golgi stack membrane. It carries out the reaction UDP-alpha-D-glucuronate + H(+) = UDP-alpha-D-xylose + CO2. The protein operates within nucleotide-sugar biosynthesis; UDP-alpha-D-xylose biosynthesis; UDP-alpha-D-xylose from UDP-alpha-D-glucuronate: step 1/1. In terms of biological role, catalyzes the NAD-dependent decarboxylation of UDP-glucuronic acid to UDP-xylose. Necessary for the biosynthesis of the core tetrasaccharide in glycosaminoglycan biosynthesis. The protein is UDP-glucuronic acid decarboxylase 1 of Rattus norvegicus (Rat).